We begin with the raw amino-acid sequence, 626 residues long: 1-deoxy-D-xylulose-5-phosphate synthase 2 (626 aa).

Thiamine diphosphate-binding positions include His-74 and 115–117 (GHA). Mg(2+) is bound at residue Asp-146. Residues 147–148 (GS), Asn-175, Phe-286, and Glu-368 each bind thiamine diphosphate. Asn-175 is a binding site for Mg(2+).

It belongs to the transketolase family. DXPS subfamily. As to quaternary structure, homodimer. Requires Mg(2+) as cofactor. Thiamine diphosphate is required as a cofactor.

It carries out the reaction D-glyceraldehyde 3-phosphate + pyruvate + H(+) = 1-deoxy-D-xylulose 5-phosphate + CO2. Its pathway is metabolic intermediate biosynthesis; 1-deoxy-D-xylulose 5-phosphate biosynthesis; 1-deoxy-D-xylulose 5-phosphate from D-glyceraldehyde 3-phosphate and pyruvate: step 1/1. Functionally, catalyzes the acyloin condensation reaction between C atoms 2 and 3 of pyruvate and glyceraldehyde 3-phosphate to yield 1-deoxy-D-xylulose-5-phosphate (DXP). This is 1-deoxy-D-xylulose-5-phosphate synthase 2 from Geobacter sulfurreducens (strain ATCC 51573 / DSM 12127 / PCA).